The chain runs to 1756 residues: Periplakin (1756 aa).

Ser14 carries the phosphoserine modification. Coiled-coil stretches lie at residues 16-125 and 188-389; these read TVQT…KQIY and KEQN…QQVV. 4 Spectrin repeats span residues 216 to 317, 323 to 485, 505 to 612, and 733 to 861; these read QDYM…SHLK, HQFH…RTLQ, RQLL…EKVD, and EHFH…QNLE. The SH3 domain occupies 399–455; that stretch reads LKPIPVEALCDFEGEQGLISRGYSYTLQKNNGESWELMDSAGNKLIAPAVCFVIPPT. The residue at position 465 (Ser465) is a Phosphoserine. Coiled coils occupy residues 585 to 820 and 886 to 1645; these read LLRT…GRRS and DSGV…SVAV. Residues Ser887, Ser949, Ser1584, and Ser1657 each carry the phosphoserine modification. Residues 1557-1756 are interacts with BFSP2 and VIM; the sequence is ELDFLREENH…ELAVLVSGQK (200 aa). 2 Plectin repeats span residues 1651–1685 and 1700–1735; these read ENHLRRSIVVIHPDTGRELSPEEAHRAGLIDWNMF and VKGPNGESSVIHDRKSGKKFSIEEALQSGRLTPAQY.

It belongs to the plakin or cytolinker family. As to quaternary structure, homodimer or a heterodimer with EVPL. Found in a complex composed of PPL (via C-terminal linker domain), BFSP1 and BFSP2 in the retinal lens. Within the complex interacts (via C-terminal linker domain) with BFSP2. Interacts with VIM. Binds to the PH domain of AKT1. Interacts with FCGR1A. May interact with PPHLN1. As to expression, expressed in stratified squamous epithelia and in some other epithelia.

It is found in the cell junction. It localises to the desmosome. Its subcellular location is the cytoplasm. The protein resides in the cytoskeleton. The protein localises to the cell membrane. Functionally, component of the cornified envelope of keratinocytes. May link the cornified envelope to desmosomes and intermediate filaments. May act as a localization signal in PKB/AKT-mediated signaling. The chain is Periplakin (PPL) from Homo sapiens (Human).